We begin with the raw amino-acid sequence, 96 residues long: 5-hydroxytryptamine receptor 2B (96 aa).

Residues 1 to 8 are Extracellular-facing; that stretch reads CNQSTLQM. An N-linked (GlcNAc...) asparagine glycan is attached at asparagine 2. Residues 9–30 traverse the membrane as a helical segment; it reads LLEIFVWIGYVSSGVNPLVYTL. Residues 24 to 28 carry the NPxxY motif; important for ligand-induced conformation changes and signaling motif; that stretch reads NPLVY. The Cytoplasmic portion of the chain corresponds to 31-96; sequence FNKTFRDAFG…STMYQSPVRL (66 aa). A lipid anchor (S-palmitoyl cysteine) is attached at cysteine 45.

The protein belongs to the G-protein coupled receptor 1 family. As to quaternary structure, interacts (via C-terminus) with MPDZ.

It is found in the cell membrane. Its subcellular location is the synapse. The protein resides in the synaptosome. G-protein coupled receptor for 5-hydroxytryptamine (serotonin). Also functions as a receptor for various ergot alkaloid derivatives and psychoactive substances. Ligand binding causes a conformation change that triggers signaling via guanine nucleotide-binding proteins (G proteins) and modulates the activity of downstream effectors. HTR2B is coupled to G(q)/G(11) G alpha proteins and activates phospholipase C-beta, releasing diacylglycerol (DAG) and inositol 1,4,5-trisphosphate (IP3) second messengers that modulate the activity of phosphatidylinositol 3-kinase and promote the release of Ca(2+) ions from intracellular stores, respectively. Beta-arrestin family members inhibit signaling via G proteins and mediate activation of alternative signaling pathways. Plays a role in the regulation of dopamine and 5-hydroxytryptamine release, 5-hydroxytryptamine uptake and in the regulation of extracellular dopamine and 5-hydroxytryptamine levels, and thereby affects neural activity. May play a role in the perception of pain. Plays a role in the regulation of behavior, including impulsive behavior. Required for normal proliferation of embryonic cardiac myocytes and normal heart development. Protects cardiomyocytes against apoptosis. Plays a role in the adaptation of pulmonary arteries to chronic hypoxia. Plays a role in vasoconstriction. Required for normal osteoblast function and proliferation, and for maintaining normal bone density. Required for normal proliferation of the interstitial cells of Cajal in the intestine. The protein is 5-hydroxytryptamine receptor 2B (HTR2B) of Cavia porcellus (Guinea pig).